Consider the following 343-residue polypeptide: MDENKNKALSAALAQIEKQYGKGSIMRLGDSDVAKDIQVVSTGSLGLDIALGVGGLPRGRIIEIYGPESSGKTTLTLQAIAEMQKLGGTAAFIDAEHALDPQYAQKIGVNVQELLISQPDNGEQALEITDMLVRSGSVDVVVVDSVAALTPRAEIEGEMGEPQMGLQARLMSQALRKLTANIKRTNTMVIFINQIRMKIGVIFGNPETTTGGNALKFYASVRLDIRRTGSIKRGEEMVGNETRVKIVKNKVAPPFKQADFDILYGEGISRESEIIELGVLHKLIEKAGAWYSYNGEKIGQGKDNVRDYLKEHKSIAHEIEQKIRAAVGLAETDSRVVPPSSGE.

66–73 (GPESSGKT) serves as a coordination point for ATP.

The protein belongs to the RecA family.

Its subcellular location is the cytoplasm. Can catalyze the hydrolysis of ATP in the presence of single-stranded DNA, the ATP-dependent uptake of single-stranded DNA by duplex DNA, and the ATP-dependent hybridization of homologous single-stranded DNAs. It interacts with LexA causing its activation and leading to its autocatalytic cleavage. In Nitrosomonas europaea (strain ATCC 19718 / CIP 103999 / KCTC 2705 / NBRC 14298), this protein is Protein RecA.